Here is a 208-residue protein sequence, read N- to C-terminus: Phosphoheptose isomerase (208 aa).

The 163-residue stretch at 38 to 200 folds into the SIS domain; the sequence is MAVTLAKGHK…LFENVLALQP (163 aa). 53 to 55 is a substrate binding site; it reads NGG. Positions 62 and 66 each coordinate Zn(2+). Residues Glu66, 95-96, 121-123, Ser126, and Gln173 contribute to the substrate site; these read ND and STS. The Zn(2+) site is built by Gln173 and His181.

The protein belongs to the SIS family. GmhA subfamily. Homotetramer. Zn(2+) is required as a cofactor.

Its subcellular location is the cytoplasm. It catalyses the reaction 2 D-sedoheptulose 7-phosphate = D-glycero-alpha-D-manno-heptose 7-phosphate + D-glycero-beta-D-manno-heptose 7-phosphate. It functions in the pathway carbohydrate biosynthesis; D-glycero-D-manno-heptose 7-phosphate biosynthesis; D-glycero-alpha-D-manno-heptose 7-phosphate and D-glycero-beta-D-manno-heptose 7-phosphate from sedoheptulose 7-phosphate: step 1/1. In terms of biological role, catalyzes the isomerization of sedoheptulose 7-phosphate in D-glycero-D-manno-heptose 7-phosphate. The polypeptide is Phosphoheptose isomerase (Nitratidesulfovibrio vulgaris (strain ATCC 29579 / DSM 644 / CCUG 34227 / NCIMB 8303 / VKM B-1760 / Hildenborough) (Desulfovibrio vulgaris)).